The sequence spans 435 residues: Flavonol 7-O-rhamnosyltransferase (435 aa).

Residue glutamine 18 participates in UDP binding. Residue glutamine 18 coordinates UDP-beta-L-rhamnose. Histidine 21 acts as the Proton acceptor in catalysis. Histidine 21 contributes to the quercetin binding site. Aspartate 119 (charge relay) is an active-site residue. The UDP site is built by serine 250, alanine 315, histidine 332, glycine 336, serine 337, and glutamate 340. UDP-beta-L-rhamnose is bound by residues serine 250, alanine 315, histidine 332, glycine 336, serine 337, and glutamate 340.

Belongs to the UDP-glycosyltransferase family. In terms of tissue distribution, highly expressed in floral buds. Expressed in stems, leaves and flowers. Expressed at low levels in roots and siliques. Expressed on the adaxial side of cotyledons and emerging leaves, in trichomes, root columella cells, and the late elongation/early differentiation zone of roots.

The catalysed reaction is quercitrin + UDP-beta-L-rhamnose = quercetin 3,7-bis-O-alpha-L-rhamnoside + UDP + H(+). It carries out the reaction quercetin 3-O-beta-D-glucoside + UDP-beta-L-rhamnose = quercetin 3-O-beta-D-glucoside-7-O-alpha-L-rhamnoside + UDP + H(+). It functions in the pathway flavonoid metabolism. Its function is as follows. Flavonol 7-O-rhamnosyltransferase that catalyzes the transfer of rhamnose from UDP-rhamnose to the 7-OH position of 3-O-glycosylated flavonols, such as kaempferol 3-O-rhamnoside, kaempferol 3-O-glucoside, quercetin 3-O-glucoside, quercetin 3-O-galactoside, quercetin 3-O-rhamnoside and isorhamnetin 3-O-glucoside. Is able to glycosylate the flavonols quercetin and kaempferol to yield quercetin 7-O-rhamnoside and kaempferol 7-O-rhamnoside. Shows a strict specificity for UDP-rhamnose as sugar donor. Does not act on 3-O-glycosylated anthocyanins. The accumulation of kaempferol 3-O-rhamnoside-7-O-rhamnoside inhibits basipetal auxin transport, which influences auxin distribution and plant organ development. The sequence is that of Flavonol 7-O-rhamnosyltransferase from Arabidopsis thaliana (Mouse-ear cress).